The chain runs to 227 residues: ATP synthase F(0) complex subunit a (227 aa).

The next 6 membrane-spanning stretches (helical) occupy residues 9–29 (FASP…LPWV), 69–89 (WALL…LGLL), 98–118 (QLSL…IIGM), 132–152 (EGTP…SLFI), 165–185 (LTAG…LMPM), and 190–210 (AILT…VAMI).

Belongs to the ATPase A chain family. As to quaternary structure, component of the ATP synthase complex composed at least of ATP5F1A/subunit alpha, ATP5F1B/subunit beta, ATP5MC1/subunit c (homooctomer), MT-ATP6/subunit a, MT-ATP8/subunit 8, ATP5ME/subunit e, ATP5MF/subunit f, ATP5MG/subunit g, ATP5MK/subunit k, ATP5MJ/subunit j, ATP5F1C/subunit gamma, ATP5F1D/subunit delta, ATP5F1E/subunit epsilon, ATP5PF/subunit F6, ATP5PB/subunit b, ATP5PD/subunit d, ATP5PO/subunit OSCP. ATP synthase complex consists of a soluble F(1) head domain (subunits alpha(3) and beta(3)) - the catalytic core - and a membrane F(0) domain - the membrane proton channel (subunits c, a, 8, e, f, g, k and j). These two domains are linked by a central stalk (subunits gamma, delta, and epsilon) rotating inside the F1 region and a stationary peripheral stalk (subunits F6, b, d, and OSCP). Interacts with DNAJC30; interaction is direct.

Its subcellular location is the mitochondrion inner membrane. It carries out the reaction H(+)(in) = H(+)(out). In terms of biological role, subunit a, of the mitochondrial membrane ATP synthase complex (F(1)F(0) ATP synthase or Complex V) that produces ATP from ADP in the presence of a proton gradient across the membrane which is generated by electron transport complexes of the respiratory chain. ATP synthase complex consist of a soluble F(1) head domain - the catalytic core - and a membrane F(1) domain - the membrane proton channel. These two domains are linked by a central stalk rotating inside the F(1) region and a stationary peripheral stalk. During catalysis, ATP synthesis in the catalytic domain of F(1) is coupled via a rotary mechanism of the central stalk subunits to proton translocation. With the subunit c (ATP5MC1), forms the proton-conducting channel in the F(0) domain, that contains two crucial half-channels (inlet and outlet) that facilitate proton movement from the mitochondrial intermembrane space (IMS) into the matrix. Protons are taken up via the inlet half-channel and released through the outlet half-channel, following a Grotthuss mechanism. This chain is ATP synthase F(0) complex subunit a, found in Carassius auratus (Goldfish).